The chain runs to 129 residues: Large ribosomal subunit protein bL20 (129 aa).

It belongs to the bacterial ribosomal protein bL20 family.

In terms of biological role, binds directly to 23S ribosomal RNA and is necessary for the in vitro assembly process of the 50S ribosomal subunit. It is not involved in the protein synthesizing functions of that subunit. The chain is Large ribosomal subunit protein bL20 from Mycolicibacterium smegmatis (strain ATCC 700084 / mc(2)155) (Mycobacterium smegmatis).